The following is a 419-amino-acid chain: F-box/LRR-repeat protein At1g67190 (419 aa).

Residues 1–48 enclose the F-box domain; it reads MDYLPVEVIGNILSRLGGARDVVIASATCRKWREACRKHLQTLSFNSA. LRR repeat units lie at residues 53 to 82, 96 to 124, 133 to 157, 158 to 183, 185 to 209, 245 to 272, 273 to 297, 301 to 326, and 356 to 381; these read YRDL…SIMM, WLMY…EICG, LAHN…LSLS, YVSI…ELVS, EIAM…YFDG, HFKL…DVNH, FTMV…RLWD, DDDD…SLSY, and INDV…IIYG.

In Arabidopsis thaliana (Mouse-ear cress), this protein is F-box/LRR-repeat protein At1g67190.